Reading from the N-terminus, the 429-residue chain is Histidine--tRNA ligase (429 aa).

It belongs to the class-II aminoacyl-tRNA synthetase family. In terms of assembly, homodimer.

It is found in the cytoplasm. It carries out the reaction tRNA(His) + L-histidine + ATP = L-histidyl-tRNA(His) + AMP + diphosphate + H(+). The protein is Histidine--tRNA ligase of Desulfotalea psychrophila (strain LSv54 / DSM 12343).